Here is a 76-residue protein sequence, read N- to C-terminus: MKNSSILFVLIIVVFLISSSGNKKMVGEAKKCDQTWTCEGEDKCREKCLTLHNGVGVCDLYTAPLVPKQCFCHYDC.

An N-terminal signal peptide occupies residues 1-21; it reads MKNSSILFVLIIVVFLISSSG. Disulfide bonds link cysteine 32-cysteine 76, cysteine 38-cysteine 58, cysteine 44-cysteine 70, and cysteine 48-cysteine 72.

This sequence belongs to the DEFL family.

It is found in the secreted. This is Putative defensin-like protein 184 (LCR18) from Arabidopsis thaliana (Mouse-ear cress).